The chain runs to 132 residues: Small ribosomal subunit protein uS11 (132 aa).

The protein belongs to the universal ribosomal protein uS11 family. As to quaternary structure, part of the 30S ribosomal subunit. Interacts with proteins S7 and S18. Binds to IF-3.

Functionally, located on the platform of the 30S subunit, it bridges several disparate RNA helices of the 16S rRNA. Forms part of the Shine-Dalgarno cleft in the 70S ribosome. This chain is Small ribosomal subunit protein uS11, found in Chlamydia caviae (strain ATCC VR-813 / DSM 19441 / 03DC25 / GPIC) (Chlamydophila caviae).